The following is a 372-amino-acid chain: Actin-related protein 2/3 complex subunit 1B (372 aa).

6 WD repeats span residues 6–45, 50–89, 94–135, 140–179, 242–280, and 324–367; these read FLVE…WVQV, EHNG…WKPT, RINR…WVCK, PIRS…VEER, SETL…GKLS, and LHKN…SALK.

Belongs to the WD repeat ARPC1 family. In terms of assembly, component of the Arp2/3 complex composed of ACTR2/ARP2, ACTR3/ARP3, ARPC1B/p41-ARC, ARPC2/p34-ARC, ARPC3/p21-ARC, ARPC4/p20-ARC and ARPC5/p16-ARC.

The protein resides in the cytoplasm. Its subcellular location is the cytoskeleton. It localises to the nucleus. Its function is as follows. Component of the Arp2/3 complex, a multiprotein complex that mediates actin polymerization upon stimulation by nucleation-promoting factor (NPF). The Arp2/3 complex mediates the formation of branched actin networks in the cytoplasm, providing the force for cell motility. In addition to its role in the cytoplasmic cytoskeleton, the Arp2/3 complex also promotes actin polymerization in the nucleus, thereby regulating gene transcription and repair of damaged DNA. The Arp2/3 complex promotes homologous recombination (HR) repair in response to DNA damage by promoting nuclear actin polymerization, leading to drive motility of double-strand breaks (DSBs). This Bos taurus (Bovine) protein is Actin-related protein 2/3 complex subunit 1B (ARPC1B).